A 330-amino-acid chain; its full sequence is Reaction center protein M chain (330 aa).

A run of 3 helical transmembrane segments spans residues 57 to 83 (GWTS…AQVG), 115 to 144 (GGWY…EQHK), and 147 to 172 (KHIF…ILMG). Residues His185 and His205 each contribute to the (7R,8Z)-bacteriochlorophyll b site. The chain crosses the membrane as a helical span at residues 202-230 (NPFHCLSIVFLYGSVLLFCMHGGTILAVT). The Fe cation site is built by His222 and Glu237. Position 255 (Trp255) interacts with a ubiquinone. The helical transmembrane segment at 264–290 (TMEGIHRWAWWFAVLTPITGGIGILLT) threads the bilayer. A Fe cation-binding site is contributed by His269.

It belongs to the reaction center PufL/M/PsbA/D family. In terms of assembly, reaction center is composed of four bacteriochlorophylls, two bacteriopheophytins, two ubiquinones, one iron, and two highly hydrophobic polypeptide chains (designated L and M).

It is found in the cellular chromatophore membrane. In terms of biological role, the reaction center is a membrane-bound complex that mediates the initial photochemical event in the electron transfer process of photosynthesis. The protein is Reaction center protein M chain (pufM) of Roseobacter denitrificans (strain ATCC 33942 / OCh 114) (Erythrobacter sp. (strain OCh 114)).